Consider the following 292-residue polypeptide: Ribosomal protein L11 methyltransferase (292 aa).

The S-adenosyl-L-methionine site is built by T144, G165, D187, and N229.

This sequence belongs to the methyltransferase superfamily. PrmA family.

It localises to the cytoplasm. It carries out the reaction L-lysyl-[protein] + 3 S-adenosyl-L-methionine = N(6),N(6),N(6)-trimethyl-L-lysyl-[protein] + 3 S-adenosyl-L-homocysteine + 3 H(+). Its function is as follows. Methylates ribosomal protein L11. This Pseudomonas fluorescens (strain ATCC BAA-477 / NRRL B-23932 / Pf-5) protein is Ribosomal protein L11 methyltransferase.